An 81-amino-acid chain; its full sequence is Photosystem I iron-sulfur center (81 aa).

2 4Fe-4S ferredoxin-type domains span residues 2–31 (SHSVKIYDTCIGCTQCVRACPTDVLEMIPW) and 39–68 (IAPAPRTEDCVGCKRCESACPTDFLSVRVY). Cysteine 11, cysteine 14, cysteine 17, cysteine 21, cysteine 48, cysteine 51, cysteine 54, and cysteine 58 together coordinate [4Fe-4S] cluster.

The eukaryotic PSI reaction center is composed of at least 11 subunits. [4Fe-4S] cluster serves as cofactor.

Its subcellular location is the plastid. It is found in the chloroplast thylakoid membrane. The enzyme catalyses reduced [plastocyanin] + hnu + oxidized [2Fe-2S]-[ferredoxin] = oxidized [plastocyanin] + reduced [2Fe-2S]-[ferredoxin]. Its function is as follows. Apoprotein for the two 4Fe-4S centers FA and FB of photosystem I (PSI); essential for photochemical activity. FB is the terminal electron acceptor of PSI, donating electrons to ferredoxin. The C-terminus interacts with PsaA/B/D and helps assemble the protein into the PSI complex. Required for binding of PsaD and PsaE to PSI. PSI is a plastocyanin-ferredoxin oxidoreductase, converting photonic excitation into a charge separation, which transfers an electron from the donor P700 chlorophyll pair to the spectroscopically characterized acceptors A0, A1, FX, FA and FB in turn. In Drimys granadensis, this protein is Photosystem I iron-sulfur center.